We begin with the raw amino-acid sequence, 348 residues long: Lipoyl synthase, mitochondrial (348 aa).

6 residues coordinate [4Fe-4S] cluster: Cys-105, Cys-110, Cys-116, Cys-136, Cys-140, and Cys-143. The 221-residue stretch at 121–341 (ETGTATATIM…RTXXLVSYVL (221 aa)) folds into the Radical SAM core domain.

Belongs to the radical SAM superfamily. Lipoyl synthase family. [4Fe-4S] cluster is required as a cofactor.

Its subcellular location is the mitochondrion. The enzyme catalyses [[Fe-S] cluster scaffold protein carrying a second [4Fe-4S](2+) cluster] + N(6)-octanoyl-L-lysyl-[protein] + 2 oxidized [2Fe-2S]-[ferredoxin] + 2 S-adenosyl-L-methionine + 4 H(+) = [[Fe-S] cluster scaffold protein] + N(6)-[(R)-dihydrolipoyl]-L-lysyl-[protein] + 4 Fe(3+) + 2 hydrogen sulfide + 2 5'-deoxyadenosine + 2 L-methionine + 2 reduced [2Fe-2S]-[ferredoxin]. It functions in the pathway protein modification; protein lipoylation via endogenous pathway; protein N(6)-(lipoyl)lysine from octanoyl-[acyl-carrier-protein]: step 2/2. Catalyzes the radical-mediated insertion of two sulfur atoms into the C-6 and C-8 positions of the octanoyl moiety bound to the lipoyl domains of lipoate-dependent enzymes, thereby converting the octanoylated domains into lipoylated derivatives. The chain is Lipoyl synthase, mitochondrial (LIP1) from Ricinus communis (Castor bean).